The sequence spans 1252 residues: Myosin-3 (1252 aa).

In terms of domain architecture, Myosin motor spans 36-715; that stretch reads VGVSDLTLLS…TLFALENMRD (680 aa). Position 129–136 (129–136) interacts with ATP; the sequence is GESGAGKT. Phosphoserine is present on Ser357. Positions 404–486 are actin-binding; sequence SIGILDIYGF…PGIFAAMNDA (83 aa). 2 consecutive IQ domains span residues 719 to 739 and 740 to 767; these read YNMA…RIDA and AIRI…AGDK. In terms of domain architecture, TH1 spans 773–963; that stretch reads KERRNMSLLG…TILVRHGNPP (191 aa). Disordered stretches follow at residues 988–1086, 1106–1136, and 1203–1252; these read KTMK…KTSV, YSLP…PSEL, and INEP…DDDW. Residues 997–1016 show a composition bias toward low complexity; sequence KRTPQALPTSSLAASAAQAA. Composition is skewed to polar residues over residues 1050 to 1063, 1106 to 1121, and 1203 to 1219; these read PVRN…NSKV, YSLP…TDSY, and INEP…NTDL. The 63-residue stretch at 1116 to 1178 folds into the SH3 domain; it reads SQTDSYQAAY…PTSYIVKYNG (63 aa). The segment covering 1238-1252 has biased composition (acidic residues); that stretch reads SEEDISREEDDDDDW.

The protein belongs to the TRAFAC class myosin-kinesin ATPase superfamily. Myosin family. Post-translationally, phosphorylation of the TEDS site (Ser-357) is required for the polarization of the actin cytoskeleton. Phosphorylation probably activates the myosin-I ATPase activity.

The protein resides in the cytoplasm. It localises to the cytoskeleton. It is found in the actin patch. In terms of biological role, type-I myosin implicated in the organization of the actin cytoskeleton. Required for proper actin cytoskeleton polarization. At the cell cortex, assembles in patch-like structures together with proteins from the actin-polymerizing machinery and promotes actin assembly. Functions as actin nucleation-promoting factor (NPF) for the Arp2/3 complex. The chain is Myosin-3 (MYO3) from Candida glabrata (strain ATCC 2001 / BCRC 20586 / JCM 3761 / NBRC 0622 / NRRL Y-65 / CBS 138) (Yeast).